The primary structure comprises 99 residues: Integration host factor subunit beta (99 aa).

Belongs to the bacterial histone-like protein family. Heterodimer of an alpha and a beta chain.

This protein is one of the two subunits of integration host factor, a specific DNA-binding protein that functions in genetic recombination as well as in transcriptional and translational control. The polypeptide is Integration host factor subunit beta (Laribacter hongkongensis (strain HLHK9)).